The chain runs to 215 residues: Phosphoenolpyruvate guanylyltransferase (215 aa).

The phosphoenolpyruvate site is built by Thr144, Gly159, and Ser162.

Belongs to the CofC family.

It carries out the reaction phosphoenolpyruvate + GTP + H(+) = enolpyruvoyl-2-diphospho-5'-guanosine + diphosphate. It participates in cofactor biosynthesis; coenzyme F420 biosynthesis. Guanylyltransferase that catalyzes the activation of phosphoenolpyruvate (PEP) as enolpyruvoyl-2-diphospho-5'-guanosine, via the condensation of PEP with GTP. It is involved in the biosynthesis of coenzyme F420, a hydride carrier cofactor. This is Phosphoenolpyruvate guanylyltransferase from Geodermatophilus obscurus (strain ATCC 25078 / DSM 43160 / JCM 3152 / CCUG 61914 / KCC A-0152 / KCTC 9177 / NBRC 13315 / NRRL B-3577 / G-20).